A 56-amino-acid polypeptide reads, in one-letter code: Protein YqiD (56 aa).

The helical transmembrane segment at 2-22 threads the bilayer; that stretch reads FIAWYWIVLIALVVVGYFLHL.

It localises to the cell inner membrane. The sequence is that of Protein YqiD from Escherichia coli (strain K12).